The sequence spans 197 residues: Holliday junction branch migration complex subunit RuvA (197 aa).

Residues 1-64 (MIALLRGLVV…EDVLALYGFL (64 aa)) are domain I. Positions 65–143 (TQDEKALFEK…AATGEEPGAP (79 aa)) are domain II. The flexible linker stretch occupies residues 144-153 (AAEALSPIDQ). The tract at residues 153–197 (QDVLSALLNLGCARPQAEAAVRKAKAAGASLDFEPLFRRALELVR) is domain III.

It belongs to the RuvA family. In terms of assembly, homotetramer. Forms an RuvA(8)-RuvB(12)-Holliday junction (HJ) complex. HJ DNA is sandwiched between 2 RuvA tetramers; dsDNA enters through RuvA and exits via RuvB. An RuvB hexamer assembles on each DNA strand where it exits the tetramer. Each RuvB hexamer is contacted by two RuvA subunits (via domain III) on 2 adjacent RuvB subunits; this complex drives branch migration. In the full resolvosome a probable DNA-RuvA(4)-RuvB(12)-RuvC(2) complex forms which resolves the HJ.

The protein localises to the cytoplasm. Its function is as follows. The RuvA-RuvB-RuvC complex processes Holliday junction (HJ) DNA during genetic recombination and DNA repair, while the RuvA-RuvB complex plays an important role in the rescue of blocked DNA replication forks via replication fork reversal (RFR). RuvA specifically binds to HJ cruciform DNA, conferring on it an open structure. The RuvB hexamer acts as an ATP-dependent pump, pulling dsDNA into and through the RuvAB complex. HJ branch migration allows RuvC to scan DNA until it finds its consensus sequence, where it cleaves and resolves the cruciform DNA. This chain is Holliday junction branch migration complex subunit RuvA, found in Solibacter usitatus (strain Ellin6076).